A 124-amino-acid polypeptide reads, in one-letter code: Large ribosomal subunit protein uL29 (124 aa).

The protein belongs to the universal ribosomal protein uL29 family.

This is Large ribosomal subunit protein uL29 (RPL35) from Tetrahymena thermophila (strain SB210).